The sequence spans 164 residues: Large ribosomal subunit protein bL17 (164 aa).

Residues 127-164 (RARTDSVPARKGAGKKDASRVSGTVPDGQSQKIGKKKE) are disordered.

Belongs to the bacterial ribosomal protein bL17 family. In terms of assembly, part of the 50S ribosomal subunit. Contacts protein L32.

The protein is Large ribosomal subunit protein bL17 of Treponema pallidum (strain Nichols).